The sequence spans 35 residues: AFGTILKALAKIAAKVVKKLATKPGATYMLKQNLQ.

Q35 carries the post-translational modification Glutamine amide.

Expressed by the venom gland.

Its subcellular location is the secreted. The chain is Cupiennin-2b from Cupiennius salei (American wandering spider).